A 506-amino-acid chain; its full sequence is Nucleosome assembly protein 1-like 3 (506 aa).

2 disordered regions span residues 1–95 (MAEA…LGTN) and 157–307 (PTEE…KRED). The segment covering 35 to 70 (SSSSSSSTSDSSSSSSTSGSSSGSGSSSSSSGSTSS) has biased composition (low complexity). The span at 157–178 (PTEEECEWNSEDEEFSSDEEVQ) shows a compositional bias: acidic residues. Residues 196 to 296 (PKENPEVKAE…ERLQDSVDLK (101 aa)) are compositionally biased toward basic and acidic residues.

It belongs to the nucleosome assembly protein (NAP) family.

The protein resides in the nucleus. The sequence is that of Nucleosome assembly protein 1-like 3 (NAP1L3) from Homo sapiens (Human).